We begin with the raw amino-acid sequence, 378 residues long: UPF0284 protein MK0224 (378 aa).

The protein belongs to the UPF0284 family.

In Methanopyrus kandleri (strain AV19 / DSM 6324 / JCM 9639 / NBRC 100938), this protein is UPF0284 protein MK0224.